Reading from the N-terminus, the 316-residue chain is Pantothenate kinase (316 aa).

95–102 is a binding site for ATP; it reads GSVAVGKS.

This sequence belongs to the prokaryotic pantothenate kinase family.

The protein localises to the cytoplasm. The catalysed reaction is (R)-pantothenate + ATP = (R)-4'-phosphopantothenate + ADP + H(+). It participates in cofactor biosynthesis; coenzyme A biosynthesis; CoA from (R)-pantothenate: step 1/5. The sequence is that of Pantothenate kinase from Shewanella sp. (strain MR-4).